Here is a 291-residue protein sequence, read N- to C-terminus: tRNA dimethylallyltransferase (291 aa).

An ATP-binding site is contributed by G9–T16. T11–T16 serves as a coordination point for substrate. Positions D34–Q37 are interaction with substrate tRNA.

The protein belongs to the IPP transferase family. As to quaternary structure, monomer. Mg(2+) is required as a cofactor.

It carries out the reaction adenosine(37) in tRNA + dimethylallyl diphosphate = N(6)-dimethylallyladenosine(37) in tRNA + diphosphate. Catalyzes the transfer of a dimethylallyl group onto the adenine at position 37 in tRNAs that read codons beginning with uridine, leading to the formation of N6-(dimethylallyl)adenosine (i(6)A). This chain is tRNA dimethylallyltransferase, found in Onion yellows phytoplasma (strain OY-M).